Reading from the N-terminus, the 95-residue chain is Pyruvate dehydrogenase inhibitor (95 aa).

The protein belongs to the HesB/IscA family. In terms of assembly, interacts with the E1 module of pyruvate dehydrogenase (PdhA-PdhB).

In terms of biological role, acts as an inhibitor of the pyruvate dehydrogenase. Overexpression does not affect growth with glucose as the main carbon source, but it leads to a dramatic growth defect when cells are grown with pyruvate as the sole carbon source. This Bacillus subtilis (strain 168) protein is Pyruvate dehydrogenase inhibitor.